Consider the following 444-residue polypeptide: Tubulin beta-2 chain (444 aa).

GTP is bound by residues Gln-11, Glu-69, Ser-138, Gly-142, Thr-143, Gly-144, Asn-204, and Asn-226. Mg(2+) is bound at residue Glu-69. The interval 422–444 is disordered; the sequence is YQQYQDATAEEDDYDDGEGSTGD. A compositionally biased stretch (acidic residues) spans 429–444; the sequence is TAEEDDYDDGEGSTGD.

This sequence belongs to the tubulin family. In terms of assembly, dimer of alpha and beta chains. A typical microtubule is a hollow water-filled tube with an outer diameter of 25 nm and an inner diameter of 15 nM. Alpha-beta heterodimers associate head-to-tail to form protofilaments running lengthwise along the microtubule wall with the beta-tubulin subunit facing the microtubule plus end conferring a structural polarity. Microtubules usually have 13 protofilaments but different protofilament numbers can be found in some organisms and specialized cells. Requires Mg(2+) as cofactor. As to expression, found in areas of rapidly dividing tissues.

The protein localises to the cytoplasm. Its subcellular location is the cytoskeleton. Functionally, tubulin is the major constituent of microtubules, a cylinder consisting of laterally associated linear protofilaments composed of alpha- and beta-tubulin heterodimers. Microtubules grow by the addition of GTP-tubulin dimers to the microtubule end, where a stabilizing cap forms. Below the cap, tubulin dimers are in GDP-bound state, owing to GTPase activity of alpha-tubulin. In Daucus carota (Wild carrot), this protein is Tubulin beta-2 chain (TUBB2).